A 215-amino-acid chain; its full sequence is 7-cyano-7-deazaguanine synthase (215 aa).

8–18 lines the ATP pocket; that stretch reads LSAGLDSTVSL. Zn(2+)-binding residues include C191, C199, C202, and C205.

This sequence belongs to the QueC family. In terms of assembly, homodimer. It depends on Zn(2+) as a cofactor.

It catalyses the reaction 7-carboxy-7-deazaguanine + NH4(+) + ATP = 7-cyano-7-deazaguanine + ADP + phosphate + H2O + H(+). It participates in purine metabolism; 7-cyano-7-deazaguanine biosynthesis. Its function is as follows. Catalyzes the ATP-dependent conversion of 7-carboxy-7-deazaguanine (CDG) to 7-cyano-7-deazaguanine (preQ(0)). In Carboxydothermus hydrogenoformans (strain ATCC BAA-161 / DSM 6008 / Z-2901), this protein is 7-cyano-7-deazaguanine synthase.